Here is a 207-residue protein sequence, read N- to C-terminus: Large ribosomal subunit protein uL3 (207 aa).

This sequence belongs to the universal ribosomal protein uL3 family. As to quaternary structure, part of the 50S ribosomal subunit. Forms a cluster with proteins L14 and L19.

Its function is as follows. One of the primary rRNA binding proteins, it binds directly near the 3'-end of the 23S rRNA, where it nucleates assembly of the 50S subunit. This chain is Large ribosomal subunit protein uL3, found in Thermotoga maritima (strain ATCC 43589 / DSM 3109 / JCM 10099 / NBRC 100826 / MSB8).